A 374-amino-acid polypeptide reads, in one-letter code: Cyclin-dependent kinase 9 (374 aa).

The Protein kinase domain occupies 19-318 (YEKLAKIGQG…SDDALNHDFF (300 aa)). ATP contacts are provided by residues 25–33 (IGQGTFGEV) and Lys48. Asp151 (proton acceptor) is an active-site residue. The segment at 345–374 (PRRRGHMPQQPANQNRNPATTSQSEFDRVF) is disordered. The segment covering 354 to 368 (QPANQNRNPATTSQS) has biased composition (polar residues).

This sequence belongs to the protein kinase superfamily. CMGC Ser/Thr protein kinase family. CDC2/CDKX subfamily. Component of the super elongation complex (SEC). Associates with ccnt1/cyclin-T1, ccnt2/cyclin-T2 or ccnk/cyclin-K to form active P-TEFb.

The protein localises to the nucleus. Its subcellular location is the cytoplasm. It is found in the PML body. The enzyme catalyses L-seryl-[protein] + ATP = O-phospho-L-seryl-[protein] + ADP + H(+). It carries out the reaction L-threonyl-[protein] + ATP = O-phospho-L-threonyl-[protein] + ADP + H(+). It catalyses the reaction [DNA-directed RNA polymerase] + ATP = phospho-[DNA-directed RNA polymerase] + ADP + H(+). Its function is as follows. Protein kinase involved in the regulation of transcription. Member of the cyclin-dependent kinase pair (CDK9/cyclin-T) complex, also called positive transcription elongation factor b (P-TEFb), which facilitates the transition from abortive to productive elongation by phosphorylating the CTD (C-terminal domain) of the large subunit of RNA polymerase II (RNAP II) polr2a, supt5h and rdbp. This complex is inactive when in the 7SK snRNP complex form. Regulates cytokine inducible transcription networks by facilitating promoter recognition of target transcription factors. P-TEFb is also involved in cotranscriptional histone modification, mRNA processing and mRNA export. The polypeptide is Cyclin-dependent kinase 9 (Danio rerio (Zebrafish)).